We begin with the raw amino-acid sequence, 1057 residues long: Self-sufficient cytochrome P450 monooxygenase CYP505E3 (1057 aa).

C403 contributes to the heme binding site. The segment at 465-488 is disordered; the sequence is PSAAPFSSHARETTNASLPASPGT. The Flavodoxin-like domain maps to 494-634; the sequence is MYVLYGSNTG…AFEAWETKLW (141 aa). FMN-binding positions include 500–504 and 578–610; these read SNTGT and VFGC…QRLV. Residues 671 to 900 enclose the FAD-binding FR-type domain; sequence HDAALGTVIE…RASNAAFHLP (230 aa).

The protein in the N-terminal section; belongs to the cytochrome P450 family. FAD serves as cofactor. Requires FMN as cofactor. Heme is required as a cofactor.

It catalyses the reaction 2 oxidized [cytochrome P450] + NADPH = 2 reduced [cytochrome P450] + NADP(+) + H(+). The catalysed reaction is an organic molecule + reduced [NADPH--hemoprotein reductase] + O2 = an alcohol + oxidized [NADPH--hemoprotein reductase] + H2O + H(+). The enzyme catalyses dodecan-1-ol + reduced [NADPH--hemoprotein reductase] + O2 = 1,5-dodecanediol + oxidized [NADPH--hemoprotein reductase] + H2O + H(+). It carries out the reaction dodecan-1-ol + reduced [NADPH--hemoprotein reductase] + O2 = 1,6-dodecanediol + oxidized [NADPH--hemoprotein reductase] + H2O + H(+). Self-sufficient cytochrome P450 monooxygenase that catalyzes the regioselective in-chain hydroxylation of fatty alcohols (C9-15) as well as fatty acids (C9-15) at the omega-1 to omega-7 or omega-1 to omega-6 positions, respectively. Is also able to convert naphthalene to 1-naphthol and 1-naphthol further to 1,3-dihydroxynaphthalene. The protein is Self-sufficient cytochrome P450 monooxygenase CYP505E3 of Phanerodontia chrysosporium (White-rot fungus).